Reading from the N-terminus, the 413-residue chain is uncharacterized protein (413 aa).

The helical transmembrane segment at 25 to 47 (IVNLSALLPLITSTTSTAGSIIT) threads the bilayer.

It localises to the host membrane. This is an uncharacterized protein from Acidianus sp. F28 (AFV-2).